A 369-amino-acid chain; its full sequence is Cyclin-I2 (369 aa).

The tract at residues 1 to 116 (MASGAQLPPQ…SRKPRNLEGD (116 aa)) is disordered. 2 stretches are compositionally biased toward low complexity: residues 64 to 76 (AASL…AVPV) and 83 to 101 (APAG…EQAP).

It belongs to the cyclin family.

The chain is Cyclin-I2 (CCNI2) from Homo sapiens (Human).